Here is a 431-residue protein sequence, read N- to C-terminus: L-lysine N6-monooxygenase MbtG (431 aa).

A signal peptide spans 1 to 21 (MNPTLAVLGAGAKAVAVAAKA).

Belongs to the lysine N(6)-hydroxylase/L-ornithine N(5)-oxygenase family. It depends on FAD as a cofactor.

It carries out the reaction L-lysine + NADPH + O2 = N(6)-hydroxy-L-lysine + NADP(+) + H2O. The protein operates within siderophore biosynthesis; mycobactin biosynthesis. Functionally, flavoprotein monooxygenase required for N-hydroxylation of the two acylated lysine residues during mycobactin assembly, thus producing the hydroxamate groups necessary for iron sequestration. Is also able, but less efficiently, to hydroxylate L-lysine (non acylated) in vitro. This is L-lysine N6-monooxygenase MbtG (mbtG) from Mycobacterium bovis (strain ATCC BAA-935 / AF2122/97).